The chain runs to 381 residues: Succinyl-diaminopimelate desuccinylase (381 aa).

H69 provides a ligand contact to Zn(2+). Residue D71 is part of the active site. D103 is a Zn(2+) binding site. The active-site Proton acceptor is the E137. Positions 138, 166, and 355 each coordinate Zn(2+).

It belongs to the peptidase M20A family. DapE subfamily. Homodimer. The cofactor is Zn(2+). Requires Co(2+) as cofactor.

It catalyses the reaction N-succinyl-(2S,6S)-2,6-diaminopimelate + H2O = (2S,6S)-2,6-diaminopimelate + succinate. It participates in amino-acid biosynthesis; L-lysine biosynthesis via DAP pathway; LL-2,6-diaminopimelate from (S)-tetrahydrodipicolinate (succinylase route): step 3/3. In terms of biological role, catalyzes the hydrolysis of N-succinyl-L,L-diaminopimelic acid (SDAP), forming succinate and LL-2,6-diaminopimelate (DAP), an intermediate involved in the bacterial biosynthesis of lysine and meso-diaminopimelic acid, an essential component of bacterial cell walls. This chain is Succinyl-diaminopimelate desuccinylase, found in Rickettsia massiliae (strain Mtu5).